Reading from the N-terminus, the 199-residue chain is UPF0301 protein Rfer_1377 (199 aa).

Belongs to the UPF0301 (AlgH) family.

This Albidiferax ferrireducens (strain ATCC BAA-621 / DSM 15236 / T118) (Rhodoferax ferrireducens) protein is UPF0301 protein Rfer_1377.